We begin with the raw amino-acid sequence, 157 residues long: Cytochrome c-type biogenesis protein CcmE (157 aa).

Residues M1 to R8 lie on the Cytoplasmic side of the membrane. Residues L9 to A29 traverse the membrane as a helical; Signal-anchor for type II membrane protein segment. Residues L30 to R157 lie on the Periplasmic side of the membrane. H124 and Y128 together coordinate heme. The disordered stretch occupies residues E132–R157.

Belongs to the CcmE/CycJ family.

The protein localises to the cell inner membrane. Functionally, heme chaperone required for the biogenesis of c-type cytochromes. Transiently binds heme delivered by CcmC and transfers the heme to apo-cytochromes in a process facilitated by CcmF and CcmH. This Pseudomonas syringae pv. tomato (strain ATCC BAA-871 / DC3000) protein is Cytochrome c-type biogenesis protein CcmE.